A 534-amino-acid chain; its full sequence is NAD(P)H-quinone oxidoreductase chain 4 (534 aa).

The next 14 membrane-spanning stretches (helical) occupy residues 6–26, 38–58, 91–111, 117–137, 138–158, 171–191, 214–234, 245–265, 279–299, 316–336, 337–357, 377–399, 419–439, and 466–486; these read FPWLSTLIFFPIMATVALPFI, WYALVIGLIDFVLLIYAFYTQ, MPLILLTGFITSLAILASWPV, LFYFLILAMYGGQIAVFAVQD, LLVFFLVWELELVPVYLLLSI, FILYTAISSLFILVAALAMAF, LLCYTGFLVAFAVKLPIVPLH, TAPVHMLLAGILLKMGGYALI, FAPALIILGVVNIIYAALTSF, MGFVLIGIASFTDLGMSGAVL, QMVSHGLIGASLFFLVGATYD, IFAMFTTCSMASLALPGMSGFVA, VPVVILAGIGVILTPIYLLSM, and IFVIACLLVPIIGIGLYPKII.

The protein belongs to the complex I subunit 4 family.

The protein localises to the cellular thylakoid membrane. The catalysed reaction is a plastoquinone + NADH + (n+1) H(+)(in) = a plastoquinol + NAD(+) + n H(+)(out). It catalyses the reaction a plastoquinone + NADPH + (n+1) H(+)(in) = a plastoquinol + NADP(+) + n H(+)(out). Functionally, NDH-1 shuttles electrons from NAD(P)H, via FMN and iron-sulfur (Fe-S) centers, to quinones in the respiratory chain. The immediate electron acceptor for the enzyme in this species is believed to be plastoquinone. Couples the redox reaction to proton translocation (for every two electrons transferred, four hydrogen ions are translocated across the cytoplasmic membrane), and thus conserves the redox energy in a proton gradient. This is NAD(P)H-quinone oxidoreductase chain 4 from Acaryochloris marina (strain MBIC 11017).